Here is a 328-residue protein sequence, read N- to C-terminus: 6-phosphogluconolactonase (328 aa).

Belongs to the cycloisomerase 2 family.

It catalyses the reaction 6-phospho-D-glucono-1,5-lactone + H2O = 6-phospho-D-gluconate + H(+). The protein operates within carbohydrate degradation; pentose phosphate pathway; D-ribulose 5-phosphate from D-glucose 6-phosphate (oxidative stage): step 2/3. Functionally, catalyzes the hydrolysis of 6-phosphogluconolactone to 6-phosphogluconate. The chain is 6-phosphogluconolactonase from Xenorhabdus nematophila (strain ATCC 19061 / DSM 3370 / CCUG 14189 / LMG 1036 / NCIMB 9965 / AN6).